Here is a 494-residue protein sequence, read N- to C-terminus: Trigger factor (494 aa).

A PPIase FKBP-type domain is found at 169–254 (GDRITMDYVG…VKDVAAPGAV (86 aa)). Residues 440 to 494 (LLAEDEGEAKAETKKAAPKKKAAAKSEAAEAGEGEEAAPKKKAAPKKKASEDSAE) form a disordered region.

Belongs to the FKBP-type PPIase family. Tig subfamily.

It localises to the cytoplasm. It carries out the reaction [protein]-peptidylproline (omega=180) = [protein]-peptidylproline (omega=0). Involved in protein export. Acts as a chaperone by maintaining the newly synthesized protein in an open conformation. Functions as a peptidyl-prolyl cis-trans isomerase. In Rhizobium etli (strain ATCC 51251 / DSM 11541 / JCM 21823 / NBRC 15573 / CFN 42), this protein is Trigger factor.